The chain runs to 309 residues: DSC E3 ubiquitin ligase complex subunit C (309 aa).

N61 carries an N-linked (GlcNAc...) asparagine glycan. Disordered regions lie at residues 88–110 and 148–177; these read LPPS…GKGK and EQAD…FDRL. The next 2 membrane-spanning stretches (helical) occupy residues 257–277 and 289–309; these read DDML…AMWL and GLAV…RIMN.

Belongs to the dsc3 family. As to quaternary structure, component of the DSC E3 ubiquitin ligase complex composed of dscA, dscB, dscC and dscD.

The protein resides in the endoplasmic reticulum membrane. The protein operates within protein modification; protein ubiquitination. Its function is as follows. Component of the DSC E3 ubiquitin ligase complex which is required for the srbA transcriptional activator proteolytic cleavage to release the soluble transcription factor from the membrane in low oxygen or sterol conditions. Required for growth during hypoxia and triazole drug susceptibility, as well as for virulence in a murine model of invasive pulmonary aspergillosis (IPA). The protein is DSC E3 ubiquitin ligase complex subunit C of Aspergillus fumigatus (strain ATCC MYA-4609 / CBS 101355 / FGSC A1100 / Af293) (Neosartorya fumigata).